Here is a 343-residue protein sequence, read N- to C-terminus: UDP-3-O-acylglucosamine N-acyltransferase (343 aa).

H248 acts as the Proton acceptor in catalysis.

Belongs to the transferase hexapeptide repeat family. LpxD subfamily. Homotrimer.

It catalyses the reaction a UDP-3-O-[(3R)-3-hydroxyacyl]-alpha-D-glucosamine + a (3R)-hydroxyacyl-[ACP] = a UDP-2-N,3-O-bis[(3R)-3-hydroxyacyl]-alpha-D-glucosamine + holo-[ACP] + H(+). The protein operates within bacterial outer membrane biogenesis; LPS lipid A biosynthesis. Its function is as follows. Catalyzes the N-acylation of UDP-3-O-acylglucosamine using 3-hydroxyacyl-ACP as the acyl donor. Is involved in the biosynthesis of lipid A, a phosphorylated glycolipid that anchors the lipopolysaccharide to the outer membrane of the cell. The protein is UDP-3-O-acylglucosamine N-acyltransferase of Microcystis aeruginosa (strain NIES-843 / IAM M-2473).